The following is a 172-amino-acid chain: Capsid protein (172 aa).

Positions 1–26 (MASKWNWSGTKGRRTPRRPYGRPYKS) are disordered. The segment covering 11-20 (KGRRTPRRPY) has biased composition (basic residues).

Belongs to the nanoviridae capsid protein family.

It is found in the virion. This Faba bean necrotic yellows virus (isolate Syrian SV292-88) (FBNYV) protein is Capsid protein (DNA-S).